Consider the following 178-residue polypeptide: MTIFSSLNQFSKGHVSWLLLLLFIIFFEACALYFQHVMMLAPCVMCIYERVAMMGIGGAAIIGLIAPNNALFRWLGLIGWGLSSYKGLMLAMQHVDYQFNPSPFATCDLFVTFPSWAPLNQWVPWMFEAYGDCSKIVWQFFDLSMPQWLVVIFAGNLVALALIVIAQFFPVKRKNPIR.

Residues 1–16 lie on the Cytoplasmic side of the membrane; it reads MTIFSSLNQFSKGHVS. The chain crosses the membrane as a helical span at residues 17–33; it reads WLLLLLFIIFFEACALY. The Periplasmic segment spans residues 34–51; it reads FQHVMMLAPCVMCIYERV. An intrachain disulfide couples C43 to C46. The chain crosses the membrane as a helical span at residues 52 to 67; sequence AMMGIGGAAIIGLIAP. The Cytoplasmic segment spans residues 68-74; sequence NNALFRW. Residues 75 to 92 form a helical membrane-spanning segment; sequence LGLIGWGLSSYKGLMLAM. Over 93-147 the chain is Periplasmic; sequence QHVDYQFNPSPFATCDLFVTFPSWAPLNQWVPWMFEAYGDCSKIVWQFFDLSMPQ. C107 and C133 are oxidised to a cystine. A helical transmembrane segment spans residues 148–166; the sequence is WLVVIFAGNLVALALIVIA. The Cytoplasmic portion of the chain corresponds to 167–178; sequence QFFPVKRKNPIR.

The protein belongs to the DsbB family.

The protein localises to the cell inner membrane. Its function is as follows. Required for disulfide bond formation in some periplasmic proteins. Acts by oxidizing the DsbA protein. This Vibrio parahaemolyticus serotype O3:K6 (strain RIMD 2210633) protein is Disulfide bond formation protein B.